Here is a 284-residue protein sequence, read N- to C-terminus: Efem/EfeO family lipoprotein (284 aa).

The signal sequence occupies residues 1-17; that stretch reads MKKLTTLLLASTLLIAA. Residue C18 is the site of N-palmitoyl cysteine attachment. C18 carries the S-diacylglycerol cysteine lipid modification.

Belongs to the EfeM/EfeO family.

It localises to the cell membrane. The sequence is that of Efem/EfeO family lipoprotein from Staphylococcus aureus (strain USA300).